The chain runs to 455 residues: SVGFKAGVKDYKLTYYTPDYQTKDTDILAAFRVTPQPGVPPEEAGAAVAAESSTGTWTTVWTDGLTSLDRYKGRCYHIEPVAGEESQFIAYVAYPLDLFEEGSVTNMFTSIVGNVFGFKALRALRLEDLRIPNAYVKTFQGPPHGIQVERDKLNKYGRPLLGCTIKPKLGLSAKNYGRAVYECLRGGLDFTKDDENVNSQPFMRWRDRFLFCAEALYKAQAETGEIKGHYLNATAGTCEEMIKRAVFARELGVPIVMHDYLTGGFTANTSLAHYCRDNGLLLHIHRAMHAVIDRQKNHGMHFRVLAKALRLSGGDHIHSGTVVGKLEGEREITLGFVDLLRDDFVEKDRSRGIYFTQDWVSLPGVLPVASGGIHVWHMPALTEIFGDDSVLQFGGGTLGHPWGNAPGAVANRVALEACVQARNEGRDLASEGNQIIREASKWSPELAAACEVWKE.

Lys-5 carries the N6,N6,N6-trimethyllysine modification. Substrate contacts are provided by Asn-114 and Thr-164. Lys-166 (proton acceptor) is an active-site residue. Lys-168 is a binding site for substrate. Mg(2+) is bound by residues Lys-192, Asp-194, and Glu-195. Position 192 is an N6-carboxylysine (Lys-192). Residue His-285 is the Proton acceptor of the active site. Residues Arg-286, His-318, and Ser-370 each contribute to the substrate site.

It belongs to the RuBisCO large chain family. Type I subfamily. In terms of assembly, heterohexadecamer of 8 large chains and 8 small chains; disulfide-linked. The disulfide link is formed within the large subunit homodimers. Requires Mg(2+) as cofactor. The disulfide bond which can form in the large chain dimeric partners within the hexadecamer appears to be associated with oxidative stress and protein turnover.

The protein localises to the plastid. Its subcellular location is the chloroplast. The enzyme catalyses 2 (2R)-3-phosphoglycerate + 2 H(+) = D-ribulose 1,5-bisphosphate + CO2 + H2O. It carries out the reaction D-ribulose 1,5-bisphosphate + O2 = 2-phosphoglycolate + (2R)-3-phosphoglycerate + 2 H(+). Its function is as follows. RuBisCO catalyzes two reactions: the carboxylation of D-ribulose 1,5-bisphosphate, the primary event in carbon dioxide fixation, as well as the oxidative fragmentation of the pentose substrate in the photorespiration process. Both reactions occur simultaneously and in competition at the same active site. The protein is Ribulose bisphosphate carboxylase large chain of Lupinus paraguariensis (Lupine).